The chain runs to 319 residues: Guanosine ABC transporter permease protein NupQ (319 aa).

9 helical membrane-spanning segments follow: residues 6–26, 39–59, 65–85, 99–119, 159–179, 204–224, 235–255, 257–277, and 282–302; these read ILSIIVPATLVYAAPLILTAL, IGLEGLMIIGAFTSVLFNLFF, AAAPWLSLLAAMAAGALFSLI, VSGVAINMLALGATLFIVKLI, ILAIALAFISWFILFKTPFGL, IGVMISGLFGGLGGGVYASTI, GQGFIALAALVFGKWHPIGAL, AALFFGFAQSLSIIGSLLPLF, and NVYMLMAPYILTILALTGFIG.

This sequence belongs to the binding-protein-dependent transport system permease family. The complex is composed of two ATP-binding proteins (NupO), two transmembrane proteins (NupP and NupQ) and a solute-binding protein (NupN).

The protein resides in the cell membrane. Its function is as follows. Part of an ABC transporter complex involved in the uptake of guanosine. Responsible for the translocation of the substrate across the membrane. May be a nucleoside transporter of broad specificity but with various affinities for different substrates. The sequence is that of Guanosine ABC transporter permease protein NupQ from Bacillus subtilis (strain 168).